The chain runs to 432 residues: PC-esterase domain-containing protein 1B (432 aa).

2 disordered regions span residues 273 to 312 (WESS…SPGL) and 407 to 432 (GPYM…SRPQ). Polar residues predominate over residues 285-294 (QDNIGPQFAQ). Residues 296 to 312 (PPYPFPRPPPLLPSPGL) show a composition bias toward pro residues.

It belongs to the PC-esterase family.

This chain is PC-esterase domain-containing protein 1B (Pced1b), found in Rattus norvegicus (Rat).